The following is a 559-amino-acid chain: 5'-AMP-activated protein kinase catalytic subunit alpha-1 (559 aa).

Residues 27-279 enclose the Protein kinase domain; it reads YILGDTLGVG…IKDIREHEWF (253 aa). Threonine 32 carries the post-translational modification Phosphothreonine. ATP-binding positions include 33–41 and lysine 56; that span reads LGVGTFGKV. The Proton acceptor role is filled by aspartate 150. Phosphothreonine; by LKB1 and CaMKK2 is present on threonine 183. Phosphothreonine is present on residues threonine 269 and threonine 355. An AIS region spans residues 302-381; the sequence is EALKEVCEKF…PERVPFLVAE (80 aa). Serine 356 is modified (phosphoserine). A Phosphoserine; by ULK1 modification is found at serine 360. Threonine 368 is modified (phosphothreonine; by ULK1). A Phosphothreonine modification is found at threonine 382. Phosphoserine is present on residues serine 397, serine 467, and serine 486. A compositionally biased stretch (polar residues) spans 485–505; sequence KSGTATPQRSGSVSNYRSCQR. The disordered stretch occupies residues 485–536; that stretch reads KSGTATPQRSGSVSNYRSCQRSDSDAEAQGKSSEVSLTSSVTSLDSSPVDLT. Threonine 488 and threonine 490 each carry phosphothreonine. Residues serine 496, serine 508, serine 524, and serine 527 each carry the phosphoserine modification. Low complexity predominate over residues 516-535; that stretch reads SSEVSLTSSVTSLDSSPVDL.

Belongs to the protein kinase superfamily. CAMK Ser/Thr protein kinase family. SNF1 subfamily. In terms of assembly, AMPK is a heterotrimer of an alpha catalytic subunit (PRKAA1 or PRKAA2), a beta (PRKAB1 or PRKAB2) and a gamma non-catalytic subunits (PRKAG1, PRKAG2 or PRKAG3). Interacts with FNIP1 and FNIP2. (Microbial infection) Interacts with Dengue type 2 virus non-structural protein 1; this interaction promotes the AMPK/ERK/mTOR signaling pathway to induce autophagy. It depends on Mg(2+) as a cofactor. Post-translationally, ubiquitinated. In terms of processing, phosphorylated at Thr-183 by STK11/LKB1 in complex with STE20-related adapter-alpha (STRADA) pseudo kinase and CAB39. Also phosphorylated at Thr-183 by CAMKK2; triggered by a rise in intracellular calcium ions, without detectable changes in the AMP/ATP ratio. CAMKK1 can also phosphorylate Thr-183, but at a much lower level. Dephosphorylated by protein phosphatase 2A and 2C (PP2A and PP2C). Phosphorylated by ULK1 and ULK2; leading to negatively regulate AMPK activity and suggesting the existence of a regulatory feedback loop between ULK1, ULK2 and AMPK. Dephosphorylated by PPM1A and PPM1B. Glycosylated; O-GlcNAcylated by OGT, promoting the AMP-activated protein kinase (AMPK) activity.

Its subcellular location is the cytoplasm. It is found in the nucleus. The enzyme catalyses L-seryl-[protein] + ATP = O-phospho-L-seryl-[protein] + ADP + H(+). It carries out the reaction L-threonyl-[protein] + ATP = O-phospho-L-threonyl-[protein] + ADP + H(+). The catalysed reaction is L-seryl-[acetyl-CoA carboxylase] + ATP = O-phospho-L-seryl-[acetyl-CoA carboxylase] + ADP + H(+). It catalyses the reaction L-seryl-[3-hydroxy-3-methylglutaryl-coenzyme A reductase] + ATP = O-phospho-L-seryl-[3-hydroxy-3-methylglutaryl-coenzyme A reductase] + ADP + H(+). The enzyme catalyses L-seryl-[tau protein] + ATP = O-phospho-L-seryl-[tau protein] + ADP + H(+). It carries out the reaction L-threonyl-[tau protein] + ATP = O-phospho-L-threonyl-[tau protein] + ADP + H(+). With respect to regulation, activated by phosphorylation on Thr-183. Binding of AMP to non-catalytic gamma subunit (PRKAG1, PRKAG2 or PRKAG3) results in allosteric activation, inducing phosphorylation on Thr-183. AMP-binding to gamma subunit also sustains activity by preventing dephosphorylation of Thr-183. ADP also stimulates Thr-183 phosphorylation, without stimulating already phosphorylated AMPK. ATP promotes dephosphorylation of Thr-183, rendering the enzyme inactive. Under physiological conditions AMPK mainly exists in its inactive form in complex with ATP, which is much more abundant than AMP. AMPK is activated by antihyperglycemic drug metformin, a drug prescribed to patients with type 2 diabetes: in vivo, metformin seems to mainly inhibit liver gluconeogenesis. However, metformin can be used to activate AMPK in muscle and other cells in culture or ex vivo. Selectively inhibited by compound C (6-[4-(2-Piperidin-1-yl-ethoxy)-phenyl)]-3-pyridin-4-yl-pyyrazolo[1,5-a] pyrimidine. Activated by resveratrol, a natural polyphenol present in red wine, and S17834, a synthetic polyphenol. Catalytic subunit of AMP-activated protein kinase (AMPK), an energy sensor protein kinase that plays a key role in regulating cellular energy metabolism. In response to reduction of intracellular ATP levels, AMPK activates energy-producing pathways and inhibits energy-consuming processes: inhibits protein, carbohydrate and lipid biosynthesis, as well as cell growth and proliferation. AMPK acts via direct phosphorylation of metabolic enzymes, and by longer-term effects via phosphorylation of transcription regulators. Regulates lipid synthesis by phosphorylating and inactivating lipid metabolic enzymes such as ACACA, ACACB, GYS1, HMGCR and LIPE; regulates fatty acid and cholesterol synthesis by phosphorylating acetyl-CoA carboxylase (ACACA and ACACB) and hormone-sensitive lipase (LIPE) enzymes, respectively. Promotes lipolysis of lipid droplets by mediating phosphorylation of isoform 1 of CHKA (CHKalpha2). Regulates insulin-signaling and glycolysis by phosphorylating IRS1, PFKFB2 and PFKFB3. AMPK stimulates glucose uptake in muscle by increasing the translocation of the glucose transporter SLC2A4/GLUT4 to the plasma membrane, possibly by mediating phosphorylation of TBC1D4/AS160. Regulates transcription and chromatin structure by phosphorylating transcription regulators involved in energy metabolism such as CRTC2/TORC2, FOXO3, histone H2B, HDAC5, MEF2C, MLXIPL/ChREBP, EP300, HNF4A, p53/TP53, SREBF1, SREBF2 and PPARGC1A. Acts as a key regulator of glucose homeostasis in liver by phosphorylating CRTC2/TORC2, leading to CRTC2/TORC2 sequestration in the cytoplasm. In response to stress, phosphorylates 'Ser-36' of histone H2B (H2BS36ph), leading to promote transcription. Acts as a key regulator of cell growth and proliferation by phosphorylating FNIP1, TSC2, RPTOR, WDR24 and ATG1/ULK1: in response to nutrient limitation, negatively regulates the mTORC1 complex by phosphorylating RPTOR component of the mTORC1 complex and by phosphorylating and activating TSC2. Also phosphorylates and inhibits GATOR2 subunit WDR24 in response to nutrient limitation, leading to suppress glucose-mediated mTORC1 activation. In response to energetic stress, phosphorylates FNIP1, inactivating the non-canonical mTORC1 signaling, thereby promoting nuclear translocation of TFEB and TFE3, and inducing transcription of lysosomal or autophagy genes. In response to nutrient limitation, promotes autophagy by phosphorylating and activating ATG1/ULK1. In that process, it also activates WDR45/WIPI4. Phosphorylates CASP6, thereby preventing its autoprocessing and subsequent activation. In response to nutrient limitation, phosphorylates transcription factor FOXO3 promoting FOXO3 mitochondrial import. Also acts as a regulator of cellular polarity by remodeling the actin cytoskeleton; probably by indirectly activating myosin. AMPK also acts as a regulator of circadian rhythm by mediating phosphorylation of CRY1, leading to destabilize it. May regulate the Wnt signaling pathway by phosphorylating CTNNB1, leading to stabilize it. Also has tau-protein kinase activity: in response to amyloid beta A4 protein (APP) exposure, activated by CAMKK2, leading to phosphorylation of MAPT/TAU; however the relevance of such data remains unclear in vivo. Also phosphorylates CFTR, EEF2K, KLC1, NOS3 and SLC12A1. Regulates hepatic lipogenesis. Activated via SIRT3, represses sterol regulatory element-binding protein (SREBP) transcriptional activities and ATP-consuming lipogenesis to restore cellular energy balance. Upon stress, regulates mitochondrial fragmentation through phosphorylation of MTFR1L. This is 5'-AMP-activated protein kinase catalytic subunit alpha-1 from Homo sapiens (Human).